Consider the following 563-residue polypeptide: MTEQKLSDNERLKRESNFLRGTIADDLQDRITGGFTADNFQLIRFHGMYQQDDRDIRAERAKQKLEPLHNVMLRARMPGGIITPTQWLAIDKFAEESSLYGSIRLTTRQTFQFHGVLKPNIKLMHQTLNSIGIDSIATAGDVNRNVLCTTNPIESELHQEAYEWAKKISEHLLPKTRAYAEIWLDGEKVEGGDEEPILGSNYLPRKFKTTVVIPPQNDVDVHANDLNFIAIADNGKLVGFNVLVGGGLAMTHGDKTTYPRRADDFGFIPLVNTLEVAAAVVTTQRDWGNRSNRKNAKTKYTLDRVGVDVFKAEVEKRAGITFEASRPYEFTDRGDRIGWVEGIDGKHHLALFIENGRLLDTPGKPLKTGVAEIAKIHKGDFRMTANQNLIVAGVPAADKNKIEKIARDHGLIDDGVSEQRKNSMACVAFPTCPLAMAEAERFLPDFVTDVEGVLAKHGLAEDDNIILRVTGCANGCGRAMLAEIGLVGKAPGRYNVHLGGNRNGTRVPKMYRENITVPQIMDEIDQLVGRWANEREDGEDFGDFTVRTGIIEPVLVSKRDFYA.

Positions 426, 432, 472, and 476 each coordinate [4Fe-4S] cluster. A siroheme-binding site is contributed by C476.

This sequence belongs to the nitrite and sulfite reductase 4Fe-4S domain family. As to quaternary structure, alpha(8)-beta(8). The alpha component is a flavoprotein, the beta component is a hemoprotein. Requires siroheme as cofactor. The cofactor is [4Fe-4S] cluster.

It catalyses the reaction hydrogen sulfide + 3 NADP(+) + 3 H2O = sulfite + 3 NADPH + 4 H(+). It functions in the pathway sulfur metabolism; hydrogen sulfide biosynthesis; hydrogen sulfide from sulfite (NADPH route): step 1/1. Its function is as follows. Component of the sulfite reductase complex that catalyzes the 6-electron reduction of sulfite to sulfide. This is one of several activities required for the biosynthesis of L-cysteine from sulfate. The polypeptide is Sulfite reductase [NADPH] hemoprotein beta-component (Photobacterium profundum (strain SS9)).